The sequence spans 183 residues: Large ribosomal subunit protein uL5 (183 aa).

The protein belongs to the universal ribosomal protein uL5 family. In terms of assembly, part of the 50S ribosomal subunit; part of the 5S rRNA/L5/L18/L25 subcomplex. Contacts the 5S rRNA and the P site tRNA. Forms a bridge to the 30S subunit in the 70S ribosome.

This is one of the proteins that bind and probably mediate the attachment of the 5S RNA into the large ribosomal subunit, where it forms part of the central protuberance. In the 70S ribosome it contacts protein S13 of the 30S subunit (bridge B1b), connecting the 2 subunits; this bridge is implicated in subunit movement. Contacts the P site tRNA; the 5S rRNA and some of its associated proteins might help stabilize positioning of ribosome-bound tRNAs. In Chlorobaculum tepidum (strain ATCC 49652 / DSM 12025 / NBRC 103806 / TLS) (Chlorobium tepidum), this protein is Large ribosomal subunit protein uL5.